The following is a 121-amino-acid chain: UPF0102 protein Dhaf_3740 (121 aa).

The protein belongs to the UPF0102 family.

This is UPF0102 protein Dhaf_3740 from Desulfitobacterium hafniense (strain DSM 10664 / DCB-2).